A 103-amino-acid polypeptide reads, in one-letter code: Small ribosomal subunit protein uS17 (103 aa).

The tract at residues 78 to 103 (SHSPKADKSAGSTAPAPEAAAKEVSE) is disordered.

The protein belongs to the universal ribosomal protein uS17 family. As to quaternary structure, part of the 30S ribosomal subunit.

Its function is as follows. One of the primary rRNA binding proteins, it binds specifically to the 5'-end of 16S ribosomal RNA. The chain is Small ribosomal subunit protein uS17 from Parasynechococcus marenigrum (strain WH8102).